The following is a 194-amino-acid chain: Imidazoleglycerol-phosphate dehydratase (194 aa).

The protein belongs to the imidazoleglycerol-phosphate dehydratase family.

It is found in the cytoplasm. The enzyme catalyses D-erythro-1-(imidazol-4-yl)glycerol 3-phosphate = 3-(imidazol-4-yl)-2-oxopropyl phosphate + H2O. It participates in amino-acid biosynthesis; L-histidine biosynthesis; L-histidine from 5-phospho-alpha-D-ribose 1-diphosphate: step 6/9. This Listeria welshimeri serovar 6b (strain ATCC 35897 / DSM 20650 / CCUG 15529 / CIP 8149 / NCTC 11857 / SLCC 5334 / V8) protein is Imidazoleglycerol-phosphate dehydratase.